The primary structure comprises 393 residues: Formate-dependent phosphoribosylglycinamide formyltransferase (393 aa).

N(1)-(5-phospho-beta-D-ribosyl)glycinamide-binding positions include 22-23 (EL) and E82. ATP-binding positions include R114, K155, 160-165 (SSGKGQ), 195-198 (ESFV), and E203. Residues 119-308 (RLAAEELGLR…EFALHVRAVL (190 aa)) enclose the ATP-grasp domain. Residues E267 and E279 each contribute to the Mg(2+) site. N(1)-(5-phospho-beta-D-ribosyl)glycinamide contacts are provided by residues D286, K356, and 363–364 (RR).

It belongs to the PurK/PurT family. As to quaternary structure, homodimer.

The enzyme catalyses N(1)-(5-phospho-beta-D-ribosyl)glycinamide + formate + ATP = N(2)-formyl-N(1)-(5-phospho-beta-D-ribosyl)glycinamide + ADP + phosphate + H(+). The protein operates within purine metabolism; IMP biosynthesis via de novo pathway; N(2)-formyl-N(1)-(5-phospho-D-ribosyl)glycinamide from N(1)-(5-phospho-D-ribosyl)glycinamide (formate route): step 1/1. Functionally, involved in the de novo purine biosynthesis. Catalyzes the transfer of formate to 5-phospho-ribosyl-glycinamide (GAR), producing 5-phospho-ribosyl-N-formylglycinamide (FGAR). Formate is provided by PurU via hydrolysis of 10-formyl-tetrahydrofolate. The sequence is that of Formate-dependent phosphoribosylglycinamide formyltransferase from Oleidesulfovibrio alaskensis (strain ATCC BAA-1058 / DSM 17464 / G20) (Desulfovibrio alaskensis).